Consider the following 888-residue polypeptide: Patched domain-containing protein 1 (888 aa).

Residues F20–G40 traverse the membrane as a helical segment. 3 N-linked (GlcNAc...) asparagine glycosylation sites follow: N77, N133, and N167. An SSD domain is found at S268–F427. The next 2 helical transmembrane spans lie at V273–V293 and W298–I318. N-linked (GlcNAc...) asparagine glycosylation is found at N319 and N326. Helical transmembrane passes span T328–L348, L373–F393, C407–F427, and P502–V522. Residues N568, N599, and N608 are each glycosylated (N-linked (GlcNAc...) asparagine). The next 2 membrane-spanning stretches (helical) occupy residues A707–I727 and V738–I758. The N-linked (GlcNAc...) asparagine glycan is linked to N762. A helical transmembrane segment spans residues G795–V815. N818 carries an N-linked (GlcNAc...) asparagine glycan. Residues C826–L846 form a helical membrane-spanning segment.

It belongs to the patched family. Widely expressed, including in various regions of the brain with highest expression in the gray and white cerebellum, followed by the cerebellar vermis and the pituitary gland.

The protein resides in the cell membrane. The protein localises to the cell projection. Its subcellular location is the dendritic spine. In terms of biological role, required for the development and function of the thalamic reticular nucleus (TRN), a part of the thalamus that is critical for thalamocortical transmission, generation of sleep rhythms, sensorimotor processing and attention. Can bind cholesterol in vitro. The sequence is that of Patched domain-containing protein 1 from Homo sapiens (Human).